A 159-amino-acid chain; its full sequence is uncharacterized protein (159 aa).

3 helical membrane-spanning segments follow: residues 10–30, 52–72, and 96–116; these read FLSM…SLFF, MLIL…VILL, and LTLI…PFVT.

The protein localises to the membrane. This is an uncharacterized protein from Escherichia coli (strain K12).